A 485-amino-acid chain; its full sequence is Ulvan lyase (485 aa).

The N-terminal stretch at 1 to 33 is a signal peptide; sequence MIRNDTMLKGQFVLKKTQIALSAALMGSVLLTG. A lipid anchor (N-palmitoyl cysteine) is attached at Cys-34. Residue Cys-34 is the site of S-diacylglycerol cysteine attachment. Substrate-binding residues include Asn-64 and Asn-126. The disordered stretch occupies residues 108–128; that stretch reads FKAGTSELGRRDGGKKFDNHG. The span at 115 to 128 shows a compositional bias: basic and acidic residues; sequence LGRRDGGKKFDNHG. His-127 acts as the Proton donor in catalysis. Residues Lys-129 and His-147 each coordinate substrate. The active-site Proton acceptor is Tyr-192. Arg-208, His-212, and Tyr-250 together coordinate substrate. His-212 lines the Zn(2+) pocket. Zn(2+) contacts are provided by His-268, Cys-270, and His-282. His-282 serves as a coordination point for substrate.

Belongs to the polysaccharide lyase 25 family.

The protein localises to the cell membrane. Ulvan lyase involved in ulvan degradation. Ulvan is the main polysaccharide component of the Ulvales (green seaweed) cell wall. It is composed of disaccharide building blocks comprising 3-sulfated rhamnose (Rha3S) linked to D-glucuronic acid (GlcA), L-iduronic acid (IduA), or D-xylose (Xyl). Ulvan lyase catalyzes the endolytic cleavage of the glycosidic bond between Rha3S and the uronic acids GlcA or IduA, producing oligosaccharides that have unsaturated 4-deoxy-L-threo-hex-4-enopyranosiduronic acid (deltaUA) at the non-reducing end. This results eventually in the degradation of the ulvan polysaccharide into deltaUA-Rha3S disaccharides and deltaUA-Rha3S-Xyl-Rha3S tetrasaccharides. The protein is Ulvan lyase of Alteromonas sp. (strain LOR).